We begin with the raw amino-acid sequence, 409 residues long: DNA double-strand break repair protein Mre11 (409 aa).

4 residues coordinate Mn(2+): Asp9, His11, Asp50, and Glu85. The active-site Proton donor is the His86. Mn(2+) is bound by residues His170, His199, and His201.

The protein belongs to the MRE11/RAD32 family. Homodimer. Forms a heterotetramer composed of two Mre11 subunits and two Rad50 subunits. Mn(2+) is required as a cofactor.

Its activity is regulated as follows. Nuclease activity is regulated by Rad50. Functionally, part of the Rad50/Mre11 complex, which is involved in the early steps of DNA double-strand break (DSB) repair. The complex may facilitate opening of the processed DNA ends to aid in the recruitment of HerA and NurA. Mre11 binds to DSB ends and has both double-stranded 3'-5' exonuclease activity and single-stranded endonuclease activity. The protein is DNA double-strand break repair protein Mre11 of Aeropyrum pernix (strain ATCC 700893 / DSM 11879 / JCM 9820 / NBRC 100138 / K1).